A 145-amino-acid chain; its full sequence is D-aminoacyl-tRNA deacylase (145 aa).

Positions Gly-137–Pro-138 match the Gly-cisPro motif, important for rejection of L-amino acids motif.

Belongs to the DTD family. In terms of assembly, homodimer.

The protein resides in the cytoplasm. It carries out the reaction glycyl-tRNA(Ala) + H2O = tRNA(Ala) + glycine + H(+). The enzyme catalyses a D-aminoacyl-tRNA + H2O = a tRNA + a D-alpha-amino acid + H(+). In terms of biological role, an aminoacyl-tRNA editing enzyme that deacylates mischarged D-aminoacyl-tRNAs. Also deacylates mischarged glycyl-tRNA(Ala), protecting cells against glycine mischarging by AlaRS. Acts via tRNA-based rather than protein-based catalysis; rejects L-amino acids rather than detecting D-amino acids in the active site. By recycling D-aminoacyl-tRNA to D-amino acids and free tRNA molecules, this enzyme counteracts the toxicity associated with the formation of D-aminoacyl-tRNA entities in vivo and helps enforce protein L-homochirality. The sequence is that of D-aminoacyl-tRNA deacylase from Shewanella halifaxensis (strain HAW-EB4).